Reading from the N-terminus, the 426-residue chain is Enolase (426 aa).

Residue Gln-163 participates in (2R)-2-phosphoglycerate binding. Glu-205 acts as the Proton donor in catalysis. Asp-242, Glu-285, and Asp-312 together coordinate Mg(2+). Positions 337, 366, 367, and 388 each coordinate (2R)-2-phosphoglycerate. Residue Lys-337 is the Proton acceptor of the active site.

This sequence belongs to the enolase family. The cofactor is Mg(2+).

Its subcellular location is the cytoplasm. It localises to the secreted. It is found in the cell surface. The enzyme catalyses (2R)-2-phosphoglycerate = phosphoenolpyruvate + H2O. It participates in carbohydrate degradation; glycolysis; pyruvate from D-glyceraldehyde 3-phosphate: step 4/5. Its function is as follows. Catalyzes the reversible conversion of 2-phosphoglycerate (2-PG) into phosphoenolpyruvate (PEP). It is essential for the degradation of carbohydrates via glycolysis. The sequence is that of Enolase from Nitrobacter winogradskyi (strain ATCC 25391 / DSM 10237 / CIP 104748 / NCIMB 11846 / Nb-255).